A 421-amino-acid polypeptide reads, in one-letter code: G/T mismatch-specific thymine DNA glycosylase (421 aa).

The disordered stretch occupies residues 45 to 108 (PNMATVTEQQ…STKSKEKQEK (64 aa)). A compositionally biased stretch (basic and acidic residues) spans 77-89 (RAAEPQEPVEPKK). Residues 91-100 (ATSKKSGKST) show a composition bias toward basic residues. Glycyl lysine isopeptide (Lys-Gly) (interchain with G-Cter in SUMO2) cross-links involve residues Lys114 and Lys259. A Glycyl lysine isopeptide (Lys-Gly) (interchain with G-Cter in SUMO); alternate cross-link involves residue Lys341. Lys341 participates in a covalent cross-link: Glycyl lysine isopeptide (Lys-Gly) (interchain with G-Cter in SUMO2); alternate.

The protein belongs to the uracil-DNA glycosylase (UDG) superfamily. TDG/mug family. As to quaternary structure, homodimer. Interacts with AICDA and GADD45A. Sumoylation on Lys-341 by either SUMO1 or SUMO2 induces dissociation of the product DNA.

The protein localises to the nucleus. It catalyses the reaction Hydrolyzes mismatched double-stranded DNA and polynucleotides, releasing free thymine.. DNA glycosylase that plays a key role in active DNA demethylation: specifically recognizes and binds 5-formylcytosine (5fC) and 5-carboxylcytosine (5caC) in the context of CpG sites and mediates their excision through base-excision repair (BER) to install an unmethylated cytosine. Cannot remove 5-hydroxymethylcytosine (5hmC). According to an alternative model, involved in DNA demethylation by mediating DNA glycolase activity toward 5-hydroxymethyluracil (5hmU) produced by deamination of 5hmC. Also involved in DNA repair by acting as a thymine-DNA glycosylase that mediates correction of G/T mispairs to G/C pairs: in the DNA of higher eukaryotes, hydrolytic deamination of 5-methylcytosine to thymine leads to the formation of G/T mismatches. Its role in the repair of canonical base damage is however minor compared to its role in DNA demethylation. It is capable of hydrolyzing the carbon-nitrogen bond between the sugar-phosphate backbone of the DNA and a mispaired thymine. In addition to the G/T, it can remove thymine also from C/T and T/T mispairs in the order G/T &gt;&gt; C/T &gt; T/T. It has no detectable activity on apyrimidinic sites and does not catalyze the removal of thymine from A/T pairs or from single-stranded DNA. It can also remove uracil and 5-bromouracil from mispairs with guanine. In Mus musculus (Mouse), this protein is G/T mismatch-specific thymine DNA glycosylase (Tdg).